A 241-amino-acid chain; its full sequence is Dihydropteridine reductase (241 aa).

Residue 11-35 (LVYGGRGALGSRCVQAFRARNWWVA) participates in NADP(+) binding. N6-succinyllysine is present on residues K70, K76, K93, and K99. Y147 serves as the catalytic Proton acceptor. At S170 the chain carries Phosphoserine.

It belongs to the short-chain dehydrogenases/reductases (SDR) family. In terms of assembly, homodimer.

It catalyses the reaction 5,6,7,8-tetrahydropteridine + NAD(+) = 6,7-dihydropteridine + NADH + H(+). It carries out the reaction 5,6,7,8-tetrahydropteridine + NADP(+) = 6,7-dihydropteridine + NADPH + H(+). Functionally, catalyzes the conversion of quinonoid dihydrobiopterin into tetrahydrobiopterin. The chain is Dihydropteridine reductase (Qdpr) from Rattus norvegicus (Rat).